Reading from the N-terminus, the 66-residue chain is Large ribosomal subunit protein bL31 (66 aa).

Zn(2+) is bound by residues Cys-16, Cys-18, Cys-36, and Cys-39.

Belongs to the bacterial ribosomal protein bL31 family. Type A subfamily. As to quaternary structure, part of the 50S ribosomal subunit. Requires Zn(2+) as cofactor.

Functionally, binds the 23S rRNA. The chain is Large ribosomal subunit protein bL31 from Geobacillus thermodenitrificans (strain NG80-2).